The primary structure comprises 350 residues: Heat-inducible transcription repressor HrcA (350 aa).

The protein belongs to the HrcA family.

In terms of biological role, negative regulator of class I heat shock genes (grpE-dnaK-dnaJ and groELS operons). Prevents heat-shock induction of these operons. The chain is Heat-inducible transcription repressor HrcA from Xanthomonas axonopodis pv. citri (strain 306).